We begin with the raw amino-acid sequence, 371 residues long: Cytochrome b (371 aa).

Helical transmembrane passes span 25 to 45 (FGSM…FLAV), 69 to 90 (WMMQ…YIHI), 105 to 125 (WMSG…GYVL), and 170 to 190 (FFAL…LHVI). 2 residues coordinate heme b: His75 and His89. Residues His174 and His188 each coordinate heme b. Position 193 (His193) interacts with a ubiquinone. 4 helical membrane passes run 218–238 (HKDL…VSFF), 280–300 (LGGA…PFTH), 312–332 (LSQL…WAAT), and 339–358 (FITI…LSIP).

Belongs to the cytochrome b family. In terms of assembly, the cytochrome bc1 complex contains 3 respiratory subunits (MT-CYB, CYC1 and UQCRFS1), 2 core proteins (UQCRC1 and UQCRC2) and probably 6 low-molecular weight proteins. It depends on heme b as a cofactor.

It is found in the mitochondrion inner membrane. Its function is as follows. Component of the ubiquinol-cytochrome c reductase complex (complex III or cytochrome b-c1 complex) that is part of the mitochondrial respiratory chain. The b-c1 complex mediates electron transfer from ubiquinol to cytochrome c. Contributes to the generation of a proton gradient across the mitochondrial membrane that is then used for ATP synthesis. In Liasis mackloti savuensis (Savu python), this protein is Cytochrome b (MT-CYB).